Consider the following 554-residue polypeptide: DNA mismatch repair protein MutL (554 aa).

It belongs to the DNA mismatch repair MutL/HexB family.

Its function is as follows. This protein is involved in the repair of mismatches in DNA. It is required for dam-dependent methyl-directed DNA mismatch repair. May act as a 'molecular matchmaker', a protein that promotes the formation of a stable complex between two or more DNA-binding proteins in an ATP-dependent manner without itself being part of a final effector complex. The protein is DNA mismatch repair protein MutL of Crocosphaera subtropica (strain ATCC 51142 / BH68) (Cyanothece sp. (strain ATCC 51142)).